The following is a 477-amino-acid chain: Ribulose bisphosphate carboxylase large chain (477 aa).

Residues 1 to 2 (MS) constitute a propeptide that is removed on maturation. Residue Pro-3 is modified to N-acetylproline. Lys-14 carries the N6,N6,N6-trimethyllysine modification. Residues Asn-123 and Thr-173 each coordinate substrate. Catalysis depends on Lys-175, which acts as the Proton acceptor. Lys-177 is a substrate binding site. 3 residues coordinate Mg(2+): Lys-201, Asp-203, and Glu-204. The residue at position 201 (Lys-201) is an N6-carboxylysine. His-294 functions as the Proton acceptor in the catalytic mechanism. Substrate is bound by residues Arg-295, His-327, and Ser-379.

Belongs to the RuBisCO large chain family. Type I subfamily. Heterohexadecamer of 8 large chains and 8 small chains; disulfide-linked. The disulfide link is formed within the large subunit homodimers. Mg(2+) serves as cofactor. In terms of processing, the disulfide bond which can form in the large chain dimeric partners within the hexadecamer appears to be associated with oxidative stress and protein turnover.

It localises to the plastid. The protein localises to the chloroplast. The catalysed reaction is 2 (2R)-3-phosphoglycerate + 2 H(+) = D-ribulose 1,5-bisphosphate + CO2 + H2O. It catalyses the reaction D-ribulose 1,5-bisphosphate + O2 = 2-phosphoglycolate + (2R)-3-phosphoglycerate + 2 H(+). In terms of biological role, ruBisCO catalyzes two reactions: the carboxylation of D-ribulose 1,5-bisphosphate, the primary event in carbon dioxide fixation, as well as the oxidative fragmentation of the pentose substrate in the photorespiration process. Both reactions occur simultaneously and in competition at the same active site. In Nicotiana debneyi (Debney's tobacco), this protein is Ribulose bisphosphate carboxylase large chain.